Reading from the N-terminus, the 1173-residue chain is DNA-directed RNA polymerase subunit beta (1173 aa).

Residues 1–23 (MEGSLLVASSTSNNETANTASTD) form a disordered region. Residues 8–22 (ASSTSNNETANTAST) show a composition bias toward low complexity.

Belongs to the RNA polymerase beta chain family. The RNAP catalytic core consists of 2 alpha, 1 beta, 1 beta' and 1 omega subunit. When a sigma factor is associated with the core the holoenzyme is formed, which can initiate transcription.

It carries out the reaction RNA(n) + a ribonucleoside 5'-triphosphate = RNA(n+1) + diphosphate. In terms of biological role, DNA-dependent RNA polymerase catalyzes the transcription of DNA into RNA using the four ribonucleoside triphosphates as substrates. The sequence is that of DNA-directed RNA polymerase subunit beta from Paenarthrobacter aurescens (strain TC1).